The following is a 362-amino-acid chain: UDP-N-acetylglucosamine--N-acetylmuramyl-(pentapeptide) pyrophosphoryl-undecaprenol N-acetylglucosamine transferase (362 aa).

UDP-N-acetyl-alpha-D-glucosamine is bound by residues 14–16 (TGG), arginine 170, serine 199, and glutamine 289.

It belongs to the glycosyltransferase 28 family. MurG subfamily.

Its subcellular location is the cell inner membrane. It carries out the reaction di-trans,octa-cis-undecaprenyl diphospho-N-acetyl-alpha-D-muramoyl-L-alanyl-D-glutamyl-meso-2,6-diaminopimeloyl-D-alanyl-D-alanine + UDP-N-acetyl-alpha-D-glucosamine = di-trans,octa-cis-undecaprenyl diphospho-[N-acetyl-alpha-D-glucosaminyl-(1-&gt;4)]-N-acetyl-alpha-D-muramoyl-L-alanyl-D-glutamyl-meso-2,6-diaminopimeloyl-D-alanyl-D-alanine + UDP + H(+). It functions in the pathway cell wall biogenesis; peptidoglycan biosynthesis. In terms of biological role, cell wall formation. Catalyzes the transfer of a GlcNAc subunit on undecaprenyl-pyrophosphoryl-MurNAc-pentapeptide (lipid intermediate I) to form undecaprenyl-pyrophosphoryl-MurNAc-(pentapeptide)GlcNAc (lipid intermediate II). In Borrelia hermsii (strain HS1 / DAH), this protein is UDP-N-acetylglucosamine--N-acetylmuramyl-(pentapeptide) pyrophosphoryl-undecaprenol N-acetylglucosamine transferase.